The chain runs to 561 residues: Type II methyltransferase M.BstVI (561 aa).

It belongs to the N(4)/N(6)-methyltransferase family.

It carries out the reaction a 2'-deoxyadenosine in DNA + S-adenosyl-L-methionine = an N(6)-methyl-2'-deoxyadenosine in DNA + S-adenosyl-L-homocysteine + H(+). Its function is as follows. A gamma subtype methylase, recognizes the double-stranded sequence 5'-CTCGAG-3', methylates A-5 on both strands, and protects the DNA from cleavage by the BstVI endonuclease. This is Type II methyltransferase M.BstVI from Geobacillus stearothermophilus (Bacillus stearothermophilus).